The chain runs to 457 residues: Aromatic amino acid transport protein AroP (457 aa).

Topologically, residues 1–20 are cytoplasmic; that stretch reads MMDSQQHGEQLKRGLKNRHI. A helical membrane pass occupies residues 21–41; that stretch reads QLIALGGAIGTGLFLGSASVI. Glutamine 42 is a topological domain (periplasmic). The helical transmembrane segment at 43–63 threads the bilayer; it reads SAGPGIILGYAIAGFIAFLIM. Residues 64–86 are Cytoplasmic-facing; sequence RQLGEMVVEEPVAGSFSHFAYKY. Residues 87–107 traverse the membrane as a helical segment; the sequence is WGGFAGFASGWNYWVLYVLVA. At 108 to 117 the chain is on the periplasmic side; that stretch reads MAELTAVGKY. Residues 118-138 traverse the membrane as a helical segment; the sequence is IQFWYPEIPTWASAAAFFVII. Residues 139-155 lie on the Cytoplasmic side of the membrane; the sequence is NAINLTNVKVFGEMEFW. Residues 156–176 form a helical membrane-spanning segment; the sequence is FAIIKVIAVIAMILFGAWLLF. Topologically, residues 177-201 are periplasmic; sequence SDTAGPQATVRNLWEQGGFLPHGWT. A helical transmembrane segment spans residues 202–222; it reads GLVMMMAIIMFSFGGLELVGI. At 223–240 the chain is on the cytoplasmic side; the sequence is TAAEADNPEQSIPKATNQ. The chain crosses the membrane as a helical span at residues 241-261; sequence VIYRILIFYIGSLAVLLSLLP. Residues 262–271 lie on the Periplasmic side of the membrane; it reads WTRVTADTSP. The chain crosses the membrane as a helical span at residues 272–292; it reads FVLIFHELGDTFVANALNIVV. At 293–333 the chain is on the cytoplasmic side; sequence LTAALSVYNSCVYCNSRMLFGLAQQGNAPKALLNVDKRGVP. A helical transmembrane segment spans residues 334 to 354; sequence VSSILVSAVVTALCVLLNYLA. The Periplasmic segment spans residues 355-358; it reads PESA. The helical transmembrane segment at 359 to 379 threads the bilayer; that stretch reads FGLLMALVVSALVINWAMISL. At 380-400 the chain is on the cytoplasmic side; the sequence is AHMMFRRAKQQQGVKTRFPAL. The helical transmembrane segment at 401-421 threads the bilayer; the sequence is FYPFGNVLCLLFMAAVLIIML. Topologically, residues 422–425 are periplasmic; the sequence is MTPG. Residues 426-446 form a helical membrane-spanning segment; it reads MAISVWLIPVWLLILGVGYLC. Residues 447-457 lie on the Cytoplasmic side of the membrane; that stretch reads KEKTAKTVKAH.

It belongs to the amino acid-polyamine-organocation (APC) superfamily. Amino acid transporter (AAT) (TC 2.A.3.1) family.

It localises to the cell inner membrane. The catalysed reaction is L-phenylalanine(in) + H(+)(in) = L-phenylalanine(out) + H(+)(out). It catalyses the reaction L-tryptophan(in) + H(+)(in) = L-tryptophan(out) + H(+)(out). The enzyme catalyses L-tyrosine(in) + H(+)(in) = L-tyrosine(out) + H(+)(out). In terms of biological role, permease that is involved in the active transport across the cytoplasmic membrane of all three aromatic amino acids, phenylalanine, tyrosine and tryptophan. The polypeptide is Aromatic amino acid transport protein AroP (aroP) (Salmonella typhi).